A 430-amino-acid polypeptide reads, in one-letter code: Adenylosuccinate synthetase (430 aa).

GTP is bound by residues 12 to 18 (GDEGKGK) and 40 to 42 (GHT). Asp13 acts as the Proton acceptor in catalysis. Residues Asp13 and Gly40 each contribute to the Mg(2+) site. Residues 13-16 (DEGK), 38-41 (NAGH), Thr130, Arg144, Gln224, Thr239, and Arg303 contribute to the IMP site. His41 acts as the Proton donor in catalysis. Substrate is bound at residue 299-305 (TVTGRKR). GTP is bound by residues Arg305, 331–333 (KLD), and 413–415 (STS).

This sequence belongs to the adenylosuccinate synthetase family. In terms of assembly, homodimer. The cofactor is Mg(2+).

It is found in the cytoplasm. It catalyses the reaction IMP + L-aspartate + GTP = N(6)-(1,2-dicarboxyethyl)-AMP + GDP + phosphate + 2 H(+). It participates in purine metabolism; AMP biosynthesis via de novo pathway; AMP from IMP: step 1/2. In terms of biological role, plays an important role in the de novo pathway of purine nucleotide biosynthesis. Catalyzes the first committed step in the biosynthesis of AMP from IMP. This Paracoccus denitrificans (strain Pd 1222) protein is Adenylosuccinate synthetase.